We begin with the raw amino-acid sequence, 117 residues long: Large ribosomal subunit protein bL19 (117 aa).

This sequence belongs to the bacterial ribosomal protein bL19 family.

This protein is located at the 30S-50S ribosomal subunit interface and may play a role in the structure and function of the aminoacyl-tRNA binding site. This is Large ribosomal subunit protein bL19 from Methylibium petroleiphilum (strain ATCC BAA-1232 / LMG 22953 / PM1).